We begin with the raw amino-acid sequence, 252 residues long: Ubiquinone/menaquinone biosynthesis C-methyltransferase UbiE (252 aa).

S-adenosyl-L-methionine is bound by residues Thr75, Asp96, and 123–124; that span reads NA.

This sequence belongs to the class I-like SAM-binding methyltransferase superfamily. MenG/UbiE family.

The catalysed reaction is a 2-demethylmenaquinol + S-adenosyl-L-methionine = a menaquinol + S-adenosyl-L-homocysteine + H(+). It catalyses the reaction a 2-methoxy-6-(all-trans-polyprenyl)benzene-1,4-diol + S-adenosyl-L-methionine = a 5-methoxy-2-methyl-3-(all-trans-polyprenyl)benzene-1,4-diol + S-adenosyl-L-homocysteine + H(+). The protein operates within quinol/quinone metabolism; menaquinone biosynthesis; menaquinol from 1,4-dihydroxy-2-naphthoate: step 2/2. Its pathway is cofactor biosynthesis; ubiquinone biosynthesis. In terms of biological role, methyltransferase required for the conversion of demethylmenaquinol (DMKH2) to menaquinol (MKH2) and the conversion of 2-polyprenyl-6-methoxy-1,4-benzoquinol (DDMQH2) to 2-polyprenyl-3-methyl-6-methoxy-1,4-benzoquinol (DMQH2). The sequence is that of Ubiquinone/menaquinone biosynthesis C-methyltransferase UbiE from Methylobacterium nodulans (strain LMG 21967 / CNCM I-2342 / ORS 2060).